The primary structure comprises 353 residues: Photosystem II protein D1 (353 aa).

At T2 the chain carries N-acetylthreonine. A Phosphothreonine modification is found at T2. Helical transmembrane passes span 29–46, 118–133, and 142–156; these read YIGWFGVLMIPTLLTATS, HFFIGICSYMGREWEL, and WIAVAYSAPVAAATA. H118 is a chlorophyll a binding site. A pheophytin a-binding site is contributed by Y126. Positions 170 and 189 each coordinate [CaMn4O5] cluster. A helical membrane pass occupies residues 197-218; it reads FHMLGVAGVFGGSLFSAMHGSL. H198 lines the chlorophyll a pocket. Residues H215 and 264 to 265 contribute to the a quinone site; that span reads SF. A Fe cation-binding site is contributed by H215. Residue H272 participates in Fe cation binding. Residues 274–288 traverse the membrane as a helical segment; sequence FLAIWPVMGIWFTAL. H332, E333, D342, and A344 together coordinate [CaMn4O5] cluster. Residues 345–353 constitute a propeptide that is removed on maturation; that stretch reads SVEAPSINA.

This sequence belongs to the reaction center PufL/M/PsbA/D family. PSII is composed of 1 copy each of membrane proteins PsbA, PsbB, PsbC, PsbD, PsbE, PsbF, PsbH, PsbI, PsbJ, PsbK, PsbL, PsbM, PsbT, PsbX, PsbY, PsbZ, Psb30/Ycf12, at least 3 peripheral proteins of the oxygen-evolving complex and a large number of cofactors. It forms dimeric complexes. Requires The D1/D2 heterodimer binds P680, chlorophylls that are the primary electron donor of PSII, and subsequent electron acceptors. It shares a non-heme iron and each subunit binds pheophytin, quinone, additional chlorophylls, carotenoids and lipids. D1 provides most of the ligands for the Mn4-Ca-O5 cluster of the oxygen-evolving complex (OEC). There is also a Cl(-1) ion associated with D1 and D2, which is required for oxygen evolution. The PSII complex binds additional chlorophylls, carotenoids and specific lipids. as cofactor. Tyr-161 forms a radical intermediate that is referred to as redox-active TyrZ, YZ or Y-Z. Post-translationally, C-terminally processed by CTPA; processing is essential to allow assembly of the oxygen-evolving complex and thus photosynthetic growth.

It localises to the plastid. Its subcellular location is the chloroplast thylakoid membrane. The enzyme catalyses 2 a plastoquinone + 4 hnu + 2 H2O = 2 a plastoquinol + O2. Its function is as follows. Photosystem II (PSII) is a light-driven water:plastoquinone oxidoreductase that uses light energy to abstract electrons from H(2)O, generating O(2) and a proton gradient subsequently used for ATP formation. It consists of a core antenna complex that captures photons, and an electron transfer chain that converts photonic excitation into a charge separation. The D1/D2 (PsbA/PsbD) reaction center heterodimer binds P680, the primary electron donor of PSII as well as several subsequent electron acceptors. This Ostreococcus tauri protein is Photosystem II protein D1.